A 150-amino-acid chain; its full sequence is UPF0102 protein sll0189 (150 aa).

Belongs to the UPF0102 family.

This chain is UPF0102 protein sll0189, found in Synechocystis sp. (strain ATCC 27184 / PCC 6803 / Kazusa).